The sequence spans 311 residues: Coproporphyrin III ferrochelatase 1 (311 aa).

Residues Tyr12, Arg29, 45-46 (RY), Ser53, and Tyr124 each bind Fe-coproporphyrin III. Fe(2+) is bound by residues His182 and Glu263.

The protein belongs to the ferrochelatase family.

It localises to the cytoplasm. The enzyme catalyses Fe-coproporphyrin III + 2 H(+) = coproporphyrin III + Fe(2+). Its pathway is porphyrin-containing compound metabolism; protoheme biosynthesis. In terms of biological role, involved in coproporphyrin-dependent heme b biosynthesis. Catalyzes the insertion of ferrous iron into coproporphyrin III to form Fe-coproporphyrin III. In Bacillus thuringiensis subsp. konkukian (strain 97-27), this protein is Coproporphyrin III ferrochelatase 1.